A 348-amino-acid chain; its full sequence is Major outer membrane protein (348 aa).

Residues 1-20 form the signal peptide; that stretch reads MKKTIVALAVAAVAATSANA.

As to quaternary structure, disulfide bond interactions within and between MOMP molecules and other components form high molecular-weight oligomers.

The protein localises to the cell outer membrane. Its function is as follows. Structural rigidity of the outer membrane of elementary bodies and porin forming, permitting diffusion of solutes through the intracellular reticulate body membrane. This chain is Major outer membrane protein (ompH), found in Pasteurella multocida (strain Pm70).